The chain runs to 144 residues: Large ribosomal subunit protein uL15 (144 aa).

Residues 1 to 58 are disordered; it reads MKLNNLSPAPGSKHAEKRVGRGIGSGLGKTGGRGHKGQKSRSGGSVKPGFEGGQMPLQ. The span at 21 to 31 shows a compositional bias: gly residues; sequence RGIGSGLGKTG.

Belongs to the universal ribosomal protein uL15 family. As to quaternary structure, part of the 50S ribosomal subunit.

Its function is as follows. Binds to the 23S rRNA. The protein is Large ribosomal subunit protein uL15 of Chromohalobacter salexigens (strain ATCC BAA-138 / DSM 3043 / CIP 106854 / NCIMB 13768 / 1H11).